We begin with the raw amino-acid sequence, 151 residues long: Arginine repressor (151 aa).

The protein belongs to the ArgR family.

It is found in the cytoplasm. The protein operates within amino-acid biosynthesis; L-arginine biosynthesis [regulation]. In terms of biological role, regulates arginine biosynthesis genes. This chain is Arginine repressor, found in Clostridium novyi (strain NT).